Reading from the N-terminus, the 715-residue chain is SANT and BTB domain regulator of class switch recombination (715 aa).

In terms of domain architecture, SANT spans 21–59; it reads DMILCSLVGVPQPISWDSVARLVPGYTPKECAKRFEELK. The BTB domain maps to 146–254; that stretch reads MVIHVCDEAK…ECIRYCHKNM (109 aa). Residues 552–573 are compositionally biased toward acidic residues; it reads SEEEDYTTGSEVTEDEVGDEEE. Disordered stretches follow at residues 552–623 and 689–715; these read SEEE…VSLQ and SAHS…GRPT. Residues 578 to 605 show a composition bias toward basic residues; it reads QAGRKVKPKRSAKQTKKHISSPSIHKKE. 2 stretches are compositionally biased toward polar residues: residues 614-623 and 690-699; these read DSSPFTVSLQ and AHSNTRQMNT.

Belongs to the KIAA1841 family. As to quaternary structure, homodimer.

Functionally, negatively regulates class switch recombination or isotype switching in splenic B-cells. The chain is SANT and BTB domain regulator of class switch recombination from Xenopus laevis (African clawed frog).